A 1085-amino-acid polypeptide reads, in one-letter code: Solute carrier family 12 member 4 (1085 aa).

Topologically, residues 1 to 119 (MPHFTVVPVD…RRAAKAPSMG (119 aa)) are cytoplasmic. A phosphoserine mark is found at Ser24, Ser47, Ser81, and Ser88. The chain crosses the membrane as a discontinuously helical span at residues 120-141 (TLMGVYLPCLQNIFGVILFLRL). 2 residues coordinate K(+): Asn131 and Ile132. The Extracellular segment spans residues 142–149 (TWMVGTAG). The chain crosses the membrane as a helical span at residues 150-172 (VLQALLIVLICCCCTLLTAISMS). The Cytoplasmic segment spans residues 173–196 (AIATNGVVPAGGSYFMISRSLGPE). A helical transmembrane segment spans residues 197 to 225 (FGGAVGLCFYLGTTFAAAMYILGAIEILL). Tyr216 serves as a coordination point for K(+). Residues 226–248 (TYIAPPAAIFYPSGTHDMSSATL) are Extracellular-facing. The next 2 membrane-spanning stretches (helical) occupy residues 249-271 (NNMRVYGTIFLTLMTLVVFVGVK) and 272-297 (YVNKFASLFLACVIISILSIYAGGIK). At 298–419 (SIFDPPVFPV…LYVVADIATS (122 aa)) the chain is on the extracellular side. A disulfide bridge links Cys308 with Cys323. Asn312, Asn331, and Asn347 each carry an N-linked (GlcNAc...) asparagine glycan. A disulfide bridge links Cys343 with Cys353. A helical transmembrane segment spans residues 420–440 (FTVLVGIFFPSVTGIMAGSNR). The K(+) site is built by Pro429 and Thr432. Chloride contacts are provided by Gly433, Ile434, and Met435. Over 441 to 450 (SGDLRDAQKS) the chain is Cytoplasmic. The chain crosses the membrane as a helical span at residues 451–473 (IPVGTILAIVTTSLVYFSSVILF). Over 474 to 504 (GACIEGVVLRDKYGDGVSRNLVVGTLAWPSP) the chain is Extracellular. The helical transmembrane segment at 505 to 531 (WVIVVGSFFSTCGAGLQSLTGAPRLLQ) threads the bilayer. Residues 532 to 554 (AIAKDNIIPFLRVFGHGKANGEP) lie on the Cytoplasmic side of the membrane. The next 2 helical transmembrane spans lie at 555 to 575 (TWALLLTALIAELGILIASLD) and 576 to 598 (MVAPILSMFFLMCYLFVNLACAV). Tyr589 contacts chloride. Residues 599 to 612 (QTLLRTPNWRPRFK) are Cytoplasmic-facing. 2 consecutive transmembrane segments (helical) span residues 613-635 (YYHWTLSFLGMSLCLALMFVSSW) and 636-651 (YYALVAMLIAGMIYKY). The Cytoplasmic segment spans residues 652–1085 (IEYQGAEKEW…GGREVITIYS (434 aa)). Positions 665–681 (IRGLSLSAARYALLRLE) are scissor helix. Residues Leu697, Lys699, Lys707, Tyr708, and Val730 each coordinate ATP. Ser734 carries the phosphoserine modification. ATP-binding residues include Gly794, Trp795, and Tyr797. Ser916 and Ser967 each carry phosphoserine. Residue Thr983 is modified to Phosphothreonine. At Ser1050 the chain carries Phosphoserine.

The protein belongs to the SLC12A transporter family. K/Cl co-transporter subfamily. Homodimer; adopts a domain-swap conformation at the scissor helices connecting the transmembrane domain and C-terminal domain. Heterodimer with other K-Cl cotransporters. In terms of processing, phosphorylated, phosphorylation may regulate transporter activity. As to expression, detected in embryo, adult heart, erythrocytes, brain, kidney, stomach, ovary, testis and liver.

The protein localises to the cell membrane. It carries out the reaction K(+)(in) + chloride(in) = K(+)(out) + chloride(out). Its activity is regulated as follows. Inhibited by WNK3. In terms of biological role, mediates electroneutral potassium-chloride cotransport when activated by cell swelling. May contribute to cell volume homeostasis in single cells. May be involved in the regulation of basolateral Cl(-) exit in NaCl absorbing epithelia. The sequence is that of Solute carrier family 12 member 4 (Slc12a4) from Mus musculus (Mouse).